The sequence spans 889 residues: Cytoplasmic aconitate hydratase (889 aa).

Substrate is bound by residues glutamine 86 and 205 to 207 (DSH). Residues cysteine 437, cysteine 503, and cysteine 506 each coordinate [4Fe-4S] cluster. Substrate-binding positions include arginine 536, arginine 541, arginine 699, and 779 to 780 (SR).

It belongs to the aconitase/IPM isomerase family. In terms of assembly, interacts (when associated with the 4Fe-4S) with FBXL5. Interacts with frataxin(81-210). Requires [4Fe-4S] cluster as cofactor.

It is found in the cytoplasm. The protein localises to the cytosol. The enzyme catalyses citrate = D-threo-isocitrate. In terms of biological role, bifunctional iron sensor that switches between 2 activities depending on iron availability. Iron deprivation, promotes its mRNA binding activity through which it regulates the expression of genes involved in iron uptake, sequestration and utilization. Binds to iron-responsive elements (IRES) in the untranslated region of target mRNAs preventing for instance the translation of ferritin and aminolevulinic acid synthase and stabilizing the transferrin receptor mRNA. Its function is as follows. Conversely, when cellular iron levels are high, binds a 4Fe-4S cluster which precludes RNA binding activity and promotes the aconitase activity, the isomerization of citrate to isocitrate via cis-aconitate. In Bos taurus (Bovine), this protein is Cytoplasmic aconitate hydratase (ACO1).